An 85-amino-acid chain; its full sequence is Electron transfer flavoprotein regulatory factor 1 homolog (85 aa).

The protein belongs to the complex I LYR family. In terms of tissue distribution, highly expressed in the larval fat body.

It is found in the mitochondrion. Functionally, acts as a regulator of the electron transfer flavoprotein by promoting the removal of flavin from the ETF holoenzyme. May act with the ETF complex to coordinate lipid homeostasis in the fat body in response to stage-specific demands. This is Electron transfer flavoprotein regulatory factor 1 homolog from Drosophila melanogaster (Fruit fly).